Reading from the N-terminus, the 107-residue chain is Cytochrome c2 (107 aa).

Heme c contacts are provided by C14, C17, H18, and M80.

The protein belongs to the cytochrome c family. In terms of processing, binds 1 heme c group covalently per subunit.

Its function is as follows. Cytochrome c2 is found mainly in purple, non-sulfur, photosynthetic bacteria where it functions as the electron donor to the oxidized bacteriochlorophyll in the photophosphorylation pathway. However, it may also have a role in the respiratory chain and is found in some non-photosynthetic bacteria. The sequence is that of Cytochrome c2 from Rhodoblastus acidophilus (Rhodopseudomonas acidophila).